The chain runs to 271 residues: Mannosyl-3-phosphoglycerate phosphatase (271 aa).

Residue aspartate 13 is the Nucleophile of the active site. Aspartate 13, aspartate 15, and aspartate 214 together coordinate Mg(2+).

The protein belongs to the HAD-like hydrolase superfamily. MPGP family. It depends on Mg(2+) as a cofactor.

It localises to the cytoplasm. The enzyme catalyses 2-O-(alpha-D-mannosyl)-3-phosphoglycerate + H2O = (2R)-2-O-(alpha-D-mannosyl)-glycerate + phosphate. The protein is Mannosyl-3-phosphoglycerate phosphatase of Escherichia coli O139:H28 (strain E24377A / ETEC).